Consider the following 268-residue polypeptide: (+)-cis,trans-nepetalactol synthase NEPS2 (268 aa).

Residues 16-22, 41-43, 65-66, asparagine 92, 163-167, and 196-200 contribute to the NAD(+) site; these read GGASGIG, DIQ, DI, YVMSK, and VLTPL.

Belongs to the short-chain dehydrogenases/reductases (SDR) family.

It carries out the reaction (S)-8-oxocitronellyl enol = cis-trans-nepetalactol. In terms of biological role, functions as a non-oxidoreductive cyclase to promote the formation of cis-trans-nepetalactol. Cis-trans-nepetalactol is then oxidized by NEPS1 into cis-trans-nepetalactone, which belongs to a family of metabolites that are both insect-repellent and have euphoric effect in cats. Binds NAD(+) as classical short-chain dehydrogenase/reductase (SDR), but does not utilize it for its redox-neutral cyclase activity. This Nepeta racemosa (Catmint) protein is (+)-cis,trans-nepetalactol synthase NEPS2.